The chain runs to 103 residues: UPF0145 protein EF_0241 (103 aa).

This sequence belongs to the UPF0145 family.

This is UPF0145 protein EF_0241 from Enterococcus faecalis (strain ATCC 700802 / V583).